A 353-amino-acid polypeptide reads, in one-letter code: Photosystem II D2 protein (353 aa).

An N-acetylthreonine modification is found at Thr-2. The residue at position 2 (Thr-2) is a Phosphothreonine. A helical transmembrane segment spans residues 41-61; sequence CAYFALGGWFTGTTFVTSWYT. His-118 lines the chlorophyll a pocket. Residues 125-141 form a helical membrane-spanning segment; it reads GFMLRQFEIARSVNLRP. The pheophytin a site is built by Gln-130 and Asn-143. The chain crosses the membrane as a helical span at residues 153–166; the sequence is VFVSVFLIYPLGQS. His-198 lines the chlorophyll a pocket. Residues 208 to 228 form a helical membrane-spanning segment; sequence AALLCAIHGATVENTLFEDGD. Residues His-215 and Phe-262 each contribute to the a plastoquinone site. Fe cation is bound at residue His-215. Residue His-269 participates in Fe cation binding. A helical membrane pass occupies residues 279–295; the sequence is GLWMSAIGVVGLALNLR.

It belongs to the reaction center PufL/M/PsbA/D family. PSII is composed of 1 copy each of membrane proteins PsbA, PsbB, PsbC, PsbD, PsbE, PsbF, PsbH, PsbI, PsbJ, PsbK, PsbL, PsbM, PsbT, PsbX, PsbY, PsbZ, Psb30/Ycf12, at least 3 peripheral proteins of the oxygen-evolving complex and a large number of cofactors. It forms dimeric complexes. The cofactor is The D1/D2 heterodimer binds P680, chlorophylls that are the primary electron donor of PSII, and subsequent electron acceptors. It shares a non-heme iron and each subunit binds pheophytin, quinone, additional chlorophylls, carotenoids and lipids. There is also a Cl(-1) ion associated with D1 and D2, which is required for oxygen evolution. The PSII complex binds additional chlorophylls, carotenoids and specific lipids..

The protein resides in the plastid. It localises to the chloroplast thylakoid membrane. It carries out the reaction 2 a plastoquinone + 4 hnu + 2 H2O = 2 a plastoquinol + O2. Its function is as follows. Photosystem II (PSII) is a light-driven water:plastoquinone oxidoreductase that uses light energy to abstract electrons from H(2)O, generating O(2) and a proton gradient subsequently used for ATP formation. It consists of a core antenna complex that captures photons, and an electron transfer chain that converts photonic excitation into a charge separation. The D1/D2 (PsbA/PsbD) reaction center heterodimer binds P680, the primary electron donor of PSII as well as several subsequent electron acceptors. D2 is needed for assembly of a stable PSII complex. The sequence is that of Photosystem II D2 protein from Tetradesmus obliquus (Green alga).